A 242-amino-acid chain; its full sequence is 1-(5-phosphoribosyl)-5-[(5-phosphoribosylamino)methylideneamino] imidazole-4-carboxamide isomerase (242 aa).

Asp-8 functions as the Proton acceptor in the catalytic mechanism. Asp-130 (proton donor) is an active-site residue.

Belongs to the HisA/HisF family.

The protein localises to the cytoplasm. It catalyses the reaction 1-(5-phospho-beta-D-ribosyl)-5-[(5-phospho-beta-D-ribosylamino)methylideneamino]imidazole-4-carboxamide = 5-[(5-phospho-1-deoxy-D-ribulos-1-ylimino)methylamino]-1-(5-phospho-beta-D-ribosyl)imidazole-4-carboxamide. It functions in the pathway amino-acid biosynthesis; L-histidine biosynthesis; L-histidine from 5-phospho-alpha-D-ribose 1-diphosphate: step 4/9. This is 1-(5-phosphoribosyl)-5-[(5-phosphoribosylamino)methylideneamino] imidazole-4-carboxamide isomerase from Thioalkalivibrio sulfidiphilus (strain HL-EbGR7).